The sequence spans 335 residues: Tetraacyldisaccharide 4'-kinase (335 aa).

59–66 (TAGGNGKT) contributes to the ATP binding site.

It belongs to the LpxK family.

It catalyses the reaction a lipid A disaccharide + ATP = a lipid IVA + ADP + H(+). Its pathway is glycolipid biosynthesis; lipid IV(A) biosynthesis; lipid IV(A) from (3R)-3-hydroxytetradecanoyl-[acyl-carrier-protein] and UDP-N-acetyl-alpha-D-glucosamine: step 6/6. Transfers the gamma-phosphate of ATP to the 4'-position of a tetraacyldisaccharide 1-phosphate intermediate (termed DS-1-P) to form tetraacyldisaccharide 1,4'-bis-phosphate (lipid IVA). The chain is Tetraacyldisaccharide 4'-kinase from Vibrio campbellii (strain ATCC BAA-1116).